We begin with the raw amino-acid sequence, 394 residues long: Elongation factor Tu 2 (394 aa).

Positions 10–204 (KPHVNVGTIG…ALDNYIPEPE (195 aa)) constitute a tr-type G domain. A G1 region spans residues 19 to 26 (GHVDHGKT). 19-26 (GHVDHGKT) is a binding site for GTP. Thr-26 is a Mg(2+) binding site. Residues 60–64 (GITIS) are G2. A G3 region spans residues 81 to 84 (DCPG). Residues 81–85 (DCPGH) and 136–139 (NKCD) each bind GTP. A G4 region spans residues 136–139 (NKCD). The tract at residues 174–176 (SAL) is G5.

The protein belongs to the TRAFAC class translation factor GTPase superfamily. Classic translation factor GTPase family. EF-Tu/EF-1A subfamily. As to quaternary structure, monomer.

The protein localises to the cytoplasm. It carries out the reaction GTP + H2O = GDP + phosphate + H(+). Its function is as follows. GTP hydrolase that promotes the GTP-dependent binding of aminoacyl-tRNA to the A-site of ribosomes during protein biosynthesis. The protein is Elongation factor Tu 2 of Photobacterium profundum (strain SS9).